The sequence spans 542 residues: Carbamoyl phosphate synthase large chain, C-terminal section (542 aa).

Residues 1-389 (MSDKVLVIGA…WKAQLAAGHE (389 aa)) are carbamoyl phosphate synthetic domain. Residues 122 to 316 (SKLLKKLGIP…LAKIGTKAIL (195 aa)) form the ATP-grasp domain. Positions 158, 197, 199, 204, 230, 231, 232, 233, 273, and 287 each coordinate ATP. 3 residues coordinate Mg(2+): glutamine 273, glutamate 287, and asparagine 289. Glutamine 273, glutamate 287, and asparagine 289 together coordinate Mn(2+). The 155-residue stretch at 388-542 (HELPLEGTAV…KPEELTRYGG (155 aa)) folds into the MGS-like domain. Residues 390-542 (LPLEGTAVIS…KPEELTRYGG (153 aa)) form an allosteric domain region.

It belongs to the CarB family. In terms of assembly, composed of two chains; the small (or glutamine) chain promotes the hydrolysis of glutamine to ammonia, which is used by the large (or ammonia) chain to synthesize carbamoyl phosphate. Tetramer of heterodimers (alpha,beta)4. Requires Mg(2+) as cofactor. The cofactor is Mn(2+).

It catalyses the reaction hydrogencarbonate + L-glutamine + 2 ATP + H2O = carbamoyl phosphate + L-glutamate + 2 ADP + phosphate + 2 H(+). The catalysed reaction is hydrogencarbonate + NH4(+) + 2 ATP = carbamoyl phosphate + 2 ADP + phosphate + 2 H(+). The protein operates within amino-acid biosynthesis; L-arginine biosynthesis; carbamoyl phosphate from bicarbonate: step 1/1. Its pathway is pyrimidine metabolism; UMP biosynthesis via de novo pathway; (S)-dihydroorotate from bicarbonate: step 1/3. Large subunit of the glutamine-dependent carbamoyl phosphate synthetase (CPSase). CPSase catalyzes the formation of carbamoyl phosphate from the ammonia moiety of glutamine, carbonate, and phosphate donated by ATP, constituting the first step of 2 biosynthetic pathways, one leading to arginine and/or urea and the other to pyrimidine nucleotides. The large subunit (synthetase) binds the substrates ammonia (free or transferred from glutamine from the small subunit), hydrogencarbonate and ATP and carries out an ATP-coupled ligase reaction, activating hydrogencarbonate by forming carboxy phosphate which reacts with ammonia to form carbamoyl phosphate. The sequence is that of Carbamoyl phosphate synthase large chain, C-terminal section (carB2) from Methanopyrus kandleri (strain AV19 / DSM 6324 / JCM 9639 / NBRC 100938).